A 713-amino-acid chain; its full sequence is Mitochondrial intermediate peptidase (713 aa).

Residues 1-35 (MLCVGRLGGLGARAAALPPRRAGRGILEAGIRARR) constitute a mitochondrion transit peptide. Lys126 carries the N6-acetyllysine modification. His495 provides a ligand contact to Zn(2+). Glu496 is an active-site residue. Residues His499 and His502 each contribute to the Zn(2+) site.

Belongs to the peptidase M3 family. Monomer. Requires Zn(2+) as cofactor.

Its subcellular location is the mitochondrion matrix. The enzyme catalyses Release of an N-terminal octapeptide as second stage of processing of some proteins imported into the mitochondrion.. With respect to regulation, activity is divalent cation-dependent. It is stimulated by manganese, magnesium or calcium ions and reversibly inhibited by zinc, cobalt and iron. Functionally, cleaves proteins, imported into the mitochondrion, to their mature size. This Pongo abelii (Sumatran orangutan) protein is Mitochondrial intermediate peptidase (MIPEP).